Consider the following 158-residue polypeptide: Glutathione peroxidase-like peroxiredoxin gpx1 (158 aa).

Cys36 acts as the Cysteine sulfenic acid (-SOH) intermediate in catalysis. A disulfide bridge connects residues Cys36 and Cys82.

The protein belongs to the glutathione peroxidase family. As to quaternary structure, monomer.

It is found in the cytoplasm. Its subcellular location is the mitochondrion. The enzyme catalyses a hydroperoxide + [thioredoxin]-dithiol = an alcohol + [thioredoxin]-disulfide + H2O. Its function is as follows. Glutathione peroxidase-like protein that protects cells during oxidative stress. Has peroxidase activity reducing hydrogen peroxide, alkyl and phospholipid hydroperoxides using preferentially thioredoxin as a reducing power. May act as a scavenger of H(2)O(2). In Schizosaccharomyces pombe (strain 972 / ATCC 24843) (Fission yeast), this protein is Glutathione peroxidase-like peroxiredoxin gpx1.